A 1141-amino-acid polypeptide reads, in one-letter code: cGMP-inhibited 3',5'-cyclic phosphodiesterase 3A (1141 aa).

The disordered stretch occupies residues 1 to 42 (MAVPGDAARVRDKPVHSGVSQAPTAGRDCHHRADPASPRDSG). Transmembrane regions (helical) follow at residues 61 to 81 (LSSA…VRLV), 130 to 150 (LQPS…GLYL), 160 to 180 (AVAL…GLGV), 185 to 205 (LLSL…TWLV), 210 to 230 (LGVL…ISLE), and 232 to 252 (FKVA…ILLA). Position 312 is a phosphoserine (S312). 2 positions are modified to phosphoserine; by PKA and PKC: S428 and S438. Residues 436–448 (RVSSTWTTTTSAT) are compositionally biased toward low complexity. The tract at residues 436 to 482 (RVSSTWTTTTSATGLPTLEPAPVRRDRSTSIKLQEAPSSSPDSWNNP) is disordered. Positions 465–482 (SIKLQEAPSSSPDSWNNP) are enriched in polar residues. A phosphoserine mark is found at S492, S520, and S524. The tract at residues 590–640 (RPYSQGNPADEPLERSGVATRTPSRTDDTAQVTSDYETNNNSDSSDIVQNE) is disordered. Polar residues predominate over residues 608 to 637 (ATRTPSRTDDTAQVTSDYETNNNSDSSDIV). The segment at 669–1141 (KPILAPEPLV…EEIPTQKPDQ (473 aa)) is interaction with SLFN12. A PDEase domain is found at 674 to 1093 (PEPLVMDNLD…KMWKKVIEEE (420 aa)). H752 acts as the Proton donor in catalysis. H752 contributes to the AMP binding site. Positions 756, 836, 837, and 950 each coordinate Mn(2+). AMP contacts are provided by D837, D950, and Q1001. Residue D837 coordinates Mg(2+). Disordered regions lie at residues 1023-1062 (PGKW…ESPK) and 1100-1141 (ENQS…KPDQ). Acidic residues predominate over residues 1029–1056 (DSDESGDTDDPEEEEEEAPAPNEEETCE). Position 1033 is a phosphoserine (S1033). Position 1036 is a phosphothreonine (T1036). Residues 1100–1113 (ENQSLDQTPQSHSS) are compositionally biased toward polar residues. Residue K1120 forms a Glycyl lysine isopeptide (Lys-Gly) (interchain with G-Cter in SUMO2) linkage. Positions 1125 to 1141 (EKGKPRGEEIPTQKPDQ) are enriched in basic and acidic residues.

The protein belongs to the cyclic nucleotide phosphodiesterase family. PDE3 subfamily. In terms of assembly, homodimer. Interacts with SLFN12; direct low affinity interaction which is stimulated by binding of 17beta-estradiol/E2 to PDE3A and that positively regulates the ribonuclease activity of SLFN12. Requires Mn(2+) as cofactor. Mg(2+) is required as a cofactor.

Its subcellular location is the membrane. It is found in the cytoplasm. The protein resides in the cytosol. The catalysed reaction is a nucleoside 3',5'-cyclic phosphate + H2O = a nucleoside 5'-phosphate + H(+). The enzyme catalyses 3',5'-cyclic AMP + H2O = AMP + H(+). It carries out the reaction 3',5'-cyclic GMP + H2O = GMP + H(+). It catalyses the reaction 3',5'-cyclic UMP + H2O = UMP + H(+). With respect to regulation, inhibited by cGMP. Inhibited by 17beta-estradiol. Inhibited by milrinone. Functionally, cyclic nucleotide phosphodiesterase with specificity for the second messengers cAMP and cGMP, which are key regulators of many important physiological processes. Also has activity toward cUMP. Independently of its catalytic activity it is part of an E2/17beta-estradiol-induced pro-apoptotic signaling pathway. E2 stabilizes the PDE3A/SLFN12 complex in the cytosol, promoting the dephosphorylation of SLFN12 and activating its pro-apoptotic ribosomal RNA/rRNA ribonuclease activity. This apoptotic pathway might be relevant in tissues with high concentration of E2 and be for instance involved in placenta remodeling. In Homo sapiens (Human), this protein is cGMP-inhibited 3',5'-cyclic phosphodiesterase 3A.